The following is a 748-amino-acid chain: Formate acetyltransferase (748 aa).

The PFL domain maps to Asn5 to Lys618. The S-acetylcysteine intermediate role is filled by Cys412. Cys413 functions as the Cysteine radical intermediate in the catalytic mechanism. In terms of domain architecture, Glycine radical spans Pro625–Met748. Gly723 is subject to Glycine radical.

It belongs to the glycyl radical enzyme (GRE) family. PFL subfamily. As to quaternary structure, homodimer.

It is found in the cytoplasm. It catalyses the reaction formate + acetyl-CoA = pyruvate + CoA. Its pathway is fermentation; pyruvate fermentation; formate from pyruvate: step 1/1. In terms of biological role, catalyzes the conversion of pyruvate to formate and acetyl-CoA. The chain is Formate acetyltransferase (pflB) from Staphylococcus epidermidis (strain ATCC 12228 / FDA PCI 1200).